The chain runs to 445 residues: Histamine H3 receptor (445 aa).

Residues 1–39 (MERAPPDGLMNASGALAGEAAAAGGARGFSAAWTAVLAA) are Extracellular-facing. An N-linked (GlcNAc...) asparagine glycan is attached at asparagine 11. The helical transmembrane segment at 40-60 (LMALLIVATVLGNALVMLAFV) threads the bilayer. Residues 61–70 (ADSSLRTQNN) are Cytoplasmic-facing. A helical membrane pass occupies residues 71–91 (FFLLNLAISDFLVGAFCIPLY). Residues 92-108 (VPYVLTGRWTFGRGLCK) lie on the Extracellular side of the membrane. Cysteine 107 and cysteine 188 are disulfide-bonded. A helical membrane pass occupies residues 109 to 129 (LWLVVDYLLCASSVFNIVLIS). The Cytoplasmic segment spans residues 130–156 (YDRFLSVTRAVSYRAQQGDTRRAVRKM). A helical membrane pass occupies residues 157-177 (ALVWVLAFLLYGPAILSWEYL). Residues 178–196 (SGGSSIPEGHCYAEFFYNW) lie on the Extracellular side of the membrane. The helical transmembrane segment at 197–217 (YFLITASTLEFFTPFLSVTFF) threads the bilayer. At 218–359 (NLSIYLNIQR…LSRDKKVAKS (142 aa)) the chain is on the cytoplasmic side. Disordered regions lie at residues 234–259 (DGGR…PSCW) and 273–336 (HRYG…LEKR). A compositionally biased stretch (pro residues) spans 241–256 (PEPPPDAQPSPPPAPP). Residues 289–299 (AGLGGGSGGGA) show a composition bias toward gly residues. The span at 300 to 312 (AASPTSSSGSSSR) shows a compositional bias: low complexity. Residues 360–380 (LAIIVSIFGLCWAPYTLLMII) traverse the membrane as a helical segment. The Extracellular segment spans residues 381–396 (RAACHGHCVPDYWYET). A helical membrane pass occupies residues 397–417 (SFWLLWANSAVNPVLYPLCHY). The Cytoplasmic portion of the chain corresponds to 418-445 (SFRRAFTKLLCPQKLKVQPHGSLEQCWK). Serine 439 is modified (phosphoserine).

It belongs to the G-protein coupled receptor 1 family.

The protein localises to the cell membrane. Its function is as follows. The H3 subclass of histamine receptors could mediate the histamine signals in CNS and peripheral nervous system. Signals through the inhibition of adenylate cyclase and displays high constitutive activity (spontaneous activity in the absence of agonist). This chain is Histamine H3 receptor (Hrh3), found in Mus musculus (Mouse).